Here is a 1030-residue protein sequence, read N- to C-terminus: Exportin-T (1030 aa).

Belongs to the exportin family.

The protein resides in the nucleus. It is found in the cytoplasm. In terms of biological role, tRNA nucleus export receptor which facilitates tRNA translocation across the nuclear pore complex. Involved in pre-tRNA splicing, probably by affecting the interaction of pre-tRNA with splicing endonuclease. This chain is Exportin-T (los1), found in Aspergillus niger (strain ATCC MYA-4892 / CBS 513.88 / FGSC A1513).